Here is a 288-residue protein sequence, read N- to C-terminus: Acetyl-coenzyme A carboxylase carboxyl transferase subunit beta (288 aa).

Residues 34-288 form the CoA carboxyltransferase N-terminal domain; the sequence is LWVKCSRCNE…ANILSLHGTN (255 aa). 4 residues coordinate Zn(2+): Cys38, Cys41, Cys57, and Cys60. The C4-type zinc-finger motif lies at 38 to 60; sequence CSRCNEILYTKELDKNFKVCHKC.

The protein belongs to the AccD/PCCB family. In terms of assembly, acetyl-CoA carboxylase is a heterohexamer composed of biotin carboxyl carrier protein (AccB), biotin carboxylase (AccC) and two subunits each of ACCase subunit alpha (AccA) and ACCase subunit beta (AccD). Requires Zn(2+) as cofactor.

The protein resides in the cytoplasm. The catalysed reaction is N(6)-carboxybiotinyl-L-lysyl-[protein] + acetyl-CoA = N(6)-biotinyl-L-lysyl-[protein] + malonyl-CoA. It functions in the pathway lipid metabolism; malonyl-CoA biosynthesis; malonyl-CoA from acetyl-CoA: step 1/1. Functionally, component of the acetyl coenzyme A carboxylase (ACC) complex. Biotin carboxylase (BC) catalyzes the carboxylation of biotin on its carrier protein (BCCP) and then the CO(2) group is transferred by the transcarboxylase to acetyl-CoA to form malonyl-CoA. The protein is Acetyl-coenzyme A carboxylase carboxyl transferase subunit beta of Desulforamulus reducens (strain ATCC BAA-1160 / DSM 100696 / MI-1) (Desulfotomaculum reducens).